The primary structure comprises 364 residues: UDP-N-acetylglucosamine--N-acetylmuramyl-(pentapeptide) pyrophosphoryl-undecaprenol N-acetylglucosamine transferase (364 aa).

UDP-N-acetyl-alpha-D-glucosamine is bound by residues 10–12 (TGG), Asn-123, Ser-198, Ile-251, and Gln-296.

Belongs to the glycosyltransferase 28 family. MurG subfamily.

The protein localises to the cell membrane. The enzyme catalyses di-trans,octa-cis-undecaprenyl diphospho-N-acetyl-alpha-D-muramoyl-L-alanyl-D-glutamyl-meso-2,6-diaminopimeloyl-D-alanyl-D-alanine + UDP-N-acetyl-alpha-D-glucosamine = di-trans,octa-cis-undecaprenyl diphospho-[N-acetyl-alpha-D-glucosaminyl-(1-&gt;4)]-N-acetyl-alpha-D-muramoyl-L-alanyl-D-glutamyl-meso-2,6-diaminopimeloyl-D-alanyl-D-alanine + UDP + H(+). It participates in cell wall biogenesis; peptidoglycan biosynthesis. Functionally, cell wall formation. Catalyzes the transfer of a GlcNAc subunit on undecaprenyl-pyrophosphoryl-MurNAc-pentapeptide (lipid intermediate I) to form undecaprenyl-pyrophosphoryl-MurNAc-(pentapeptide)GlcNAc (lipid intermediate II). This is UDP-N-acetylglucosamine--N-acetylmuramyl-(pentapeptide) pyrophosphoryl-undecaprenol N-acetylglucosamine transferase from Exiguobacterium sibiricum (strain DSM 17290 / CCUG 55495 / CIP 109462 / JCM 13490 / 255-15).